We begin with the raw amino-acid sequence, 406 residues long: 2,3-bisphosphoglycerate-independent phosphoglycerate mutase (406 aa).

The segment at 156–183 (NLSDKISDSDPHSEGKPPEPIRPLDPSA) is disordered. Over residues 160–174 (KISDSDPHSEGKPPE) the composition is skewed to basic and acidic residues.

The protein belongs to the BPG-independent phosphoglycerate mutase family. A-PGAM subfamily.

The enzyme catalyses (2R)-2-phosphoglycerate = (2R)-3-phosphoglycerate. Its pathway is carbohydrate degradation; glycolysis; pyruvate from D-glyceraldehyde 3-phosphate: step 3/5. Catalyzes the interconversion of 2-phosphoglycerate and 3-phosphoglycerate. The sequence is that of 2,3-bisphosphoglycerate-independent phosphoglycerate mutase from Thermoplasma volcanium (strain ATCC 51530 / DSM 4299 / JCM 9571 / NBRC 15438 / GSS1).